We begin with the raw amino-acid sequence, 485 residues long: Bindin (485 aa).

A signal peptide spans 1 to 20; that stretch reads MGFHQISVIIVVLALASARA. A propeptide spanning residues 21-247 is cleaved from the precursor; that stretch reads ADEFPSHTDT…DSERGARKKR (227 aa). 3 disordered regions span residues 157-195, 219-273, and 305-331; these read GETRKRRGADDNDGDDVSKRASPRKGDEPAGHKLKDLAP, ISGH…PAQQ, and GGGQFGAFSPGEAEADNADYDEYSDSL. Positions 172–192 are enriched in basic and acidic residues; the sequence is DVSKRASPRKGDEPAGHKLKD. Over residues 250-264 the composition is skewed to polar residues; the sequence is NQGNYPQAMNPQSRG. The segment covering 317-331 has biased composition (acidic residues); the sequence is AEADNADYDEYSDSL. The fucose-binding domain stretch occupies residues 371-379; sequence LRHLRHHSN. The disordered stretch occupies residues 459-485; the sequence is QQGMGGVPQRMGGQPQGNAYNQGYRQG. Residues 465–475 are compositionally biased toward low complexity; it reads VPQRMGGQPQG. Residues 476-485 are compositionally biased toward polar residues; the sequence is NAYNQGYRQG.

The protein belongs to the bindin family.

It localises to the cytoplasmic vesicle. It is found in the secretory vesicle. The protein localises to the acrosome lumen. Functionally, species-specific sea urchin sperm protein required for adhesion of sperm to the egg surface during fertilization. Bindin coats the acrosomal process after it is externalized by the acrosome reaction. It binds to sulfated, fucose-containing polysaccharides on the vitelline layer receptor proteoglycans which cover the egg plasma membrane. The protein is Bindin of Mesocentrotus franciscanus (Giant red sea urchin).